A 261-amino-acid chain; its full sequence is MRVTQLSSQSFIFPSPELALREPNGLLALGGDLTAPRLLAAYQRGIFPWFNPGEMILWWSPDPRAVLFPEDLHISRSMRRFIRHCPYRFTLNHAFADVISACATERDEGTWIGRDVQQAYCQLHALGHAHSLEVWLENELVGGLYGVAVGAVFCGESMFSRADNASKSALMVFCHHFTQHGGELIDCQVLNAHTASLGAVEIPRNFFLQQLSQLQFSPLPAECWLPQSLIFHPRCSKDQPFKTPHIRLYPPLAGRLILLKW.

The protein belongs to the L/F-transferase family.

The protein resides in the cytoplasm. The catalysed reaction is N-terminal L-lysyl-[protein] + L-leucyl-tRNA(Leu) = N-terminal L-leucyl-L-lysyl-[protein] + tRNA(Leu) + H(+). It catalyses the reaction N-terminal L-arginyl-[protein] + L-leucyl-tRNA(Leu) = N-terminal L-leucyl-L-arginyl-[protein] + tRNA(Leu) + H(+). It carries out the reaction L-phenylalanyl-tRNA(Phe) + an N-terminal L-alpha-aminoacyl-[protein] = an N-terminal L-phenylalanyl-L-alpha-aminoacyl-[protein] + tRNA(Phe). In terms of biological role, functions in the N-end rule pathway of protein degradation where it conjugates Leu, Phe and, less efficiently, Met from aminoacyl-tRNAs to the N-termini of proteins containing an N-terminal arginine or lysine. This Yersinia pestis bv. Antiqua (strain Antiqua) protein is Leucyl/phenylalanyl-tRNA--protein transferase.